An 887-amino-acid chain; its full sequence is Alanine--tRNA ligase (887 aa).

Zn(2+) is bound by residues His-581, His-585, Cys-683, and His-687.

It belongs to the class-II aminoacyl-tRNA synthetase family. Zn(2+) is required as a cofactor.

The protein resides in the cytoplasm. It catalyses the reaction tRNA(Ala) + L-alanine + ATP = L-alanyl-tRNA(Ala) + AMP + diphosphate. In terms of biological role, catalyzes the attachment of alanine to tRNA(Ala) in a two-step reaction: alanine is first activated by ATP to form Ala-AMP and then transferred to the acceptor end of tRNA(Ala). Also edits incorrectly charged Ser-tRNA(Ala) and Gly-tRNA(Ala) via its editing domain. The protein is Alanine--tRNA ligase of Ehrlichia ruminantium (strain Gardel).